A 1654-amino-acid chain; its full sequence is Outer membrane protein B (1654 aa).

Positions 1334–1361 (GALRYLGTPETAEMAGPEAGAISAAVAA) are excised as a propeptide. Residues 1366-1654 (IDNVAYGIWA…QGTLKVRVNF (289 aa)) form the Autotransporter domain.

It belongs to the rickettsiae OmpA/OmpB family. In terms of processing, the N-terminus is blocked.

Its subcellular location is the periplasm. The protein resides in the secreted. It is found in the cell surface. It localises to the cell outer membrane. Functionally, the 120 kDa surface-exposed protein is a major structural protein which may play a role as a rickettsial virulence factor and/or immunogen during infection. The 32 kDa beta peptide may serve as a membrane anchor. The chain is Outer membrane protein B (ompB) from Rickettsia rickettsii.